Reading from the N-terminus, the 389-residue chain is tRNA-specific 2-thiouridylase MnmA (389 aa).

ATP-binding positions include 30-37 and Leu56; that span reads GLSGGVDS. Cys117 functions as the Nucleophile in the catalytic mechanism. A disulfide bridge connects residues Cys117 and Cys216. Gly142 lines the ATP pocket. Positions 166–168 are interaction with tRNA; sequence KDQ. Residue Cys216 is the Cysteine persulfide intermediate of the active site. Residues 321 to 322 are interaction with tRNA; that stretch reads RY.

Belongs to the MnmA/TRMU family.

It localises to the cytoplasm. The enzyme catalyses S-sulfanyl-L-cysteinyl-[protein] + uridine(34) in tRNA + AH2 + ATP = 2-thiouridine(34) in tRNA + L-cysteinyl-[protein] + A + AMP + diphosphate + H(+). Its function is as follows. Catalyzes the 2-thiolation of uridine at the wobble position (U34) of tRNA, leading to the formation of s(2)U34. This is tRNA-specific 2-thiouridylase MnmA from Synechococcus sp. (strain CC9902).